The sequence spans 200 residues: Large ribosomal subunit protein uL4 (200 aa).

A disordered region spans residues 43–71 (RAQKTRAEVSGSGKKPWRQKGTGRARSGD).

The protein belongs to the universal ribosomal protein uL4 family. As to quaternary structure, part of the 50S ribosomal subunit.

Functionally, one of the primary rRNA binding proteins, this protein initially binds near the 5'-end of the 23S rRNA. It is important during the early stages of 50S assembly. It makes multiple contacts with different domains of the 23S rRNA in the assembled 50S subunit and ribosome. Forms part of the polypeptide exit tunnel. In Actinobacillus pleuropneumoniae serotype 5b (strain L20), this protein is Large ribosomal subunit protein uL4.